The following is a 639-amino-acid chain: MNRFTAYAALFFMFSLCSTAKEAGFLHPAFNFRGTSTMSASSGDYSAAPTPLYKSWALPSSLNLTTQPPPPLTDRSYYELVQALTSKMRLDCQTVGDMTWRHLSEMLFASWNSVKEVSLKAASVTLWAIINIWFGLYWTLARLITLFLWTFSIEALCLILLGCITSLIYKGALSLSEHLPVFLFMSPLKIIWRAAFSKRNYKNERAVEGYKGFSVPQKPPKSAVIELQHENGSHLGYANCIRLYSGENALVTAEHCLEGAFATSLKTGNRIPMSTFFPIFKSARNDISILVGPPNWEGLLSVKGAHFITADKIGKGPASFYTLEKGEWMCHSATIDGAHHQFVSVLCNTGPGYSGTGFWSSKNLLGVLKGFPLEEECNYNVMSVIPSIPGITSPNYVFESTAVKGRVFSDEAVKELEREASEAVKKLARFKSLTDKNWADDYDSDEDYGLEREAATNAPAEKTAQTNSAEKTAPSTSAEKTALTNKPLNGQAAPSAKTNGNSDIPDAATSAPPMDKMVEQIITAMVGRINLSEIEEKIVSRVSQKALQKPKQKKRGRRGGKNKQNSLPPTSTQSTSGAPKKEAAPQASGSAGTSRATTTPAPEAKPSGGKNSAKFTPSWRIKQQDSAGQKPDLKLNSKA.

The signal sequence occupies residues methionine 1–alanine 20. Helical transmembrane passes span alanine 121–alanine 141, isoleucine 144–isoleucine 164, and alanine 172–tryptophan 192. The Peptidase S39 domain occupies valine 207 to glutamate 399. Residues histidine 255, aspartate 286, and serine 354 each act as for protease activity in the active site. 2 disordered regions span residues alanine 455–aspartate 515 and valine 539–alanine 639. Positions threonine 463–leucine 488 are enriched in polar residues. Residues glutamine 548–lysine 561 show a composition bias toward basic residues. Over residues serine 566 to glycine 577 the composition is skewed to polar residues. Over residues alanine 587–proline 602 the composition is skewed to low complexity.

Belongs to the peptidase S39B family. In terms of processing, specific enzymatic cleavages in vivo yield mature proteins. The protease probably cleaves itself and releases the VPg protein. The VPg protein is probably further cleaved in its C-terminus.

The protein resides in the membrane. Precursor from which the VPg molecule is probably released at the onset of the RNA synthesis. Essential for virus replication. Participates, together with the proteins P0 and P7, in the inhibition of the induction of aphid-induced host phytohormones. This could play a role in the attraction to the infected plants by aphids. This Solanum tuberosum (Potato) protein is Protein P1.